A 424-amino-acid polypeptide reads, in one-letter code: Histidine--tRNA ligase (424 aa).

This sequence belongs to the class-II aminoacyl-tRNA synthetase family. As to quaternary structure, homodimer.

Its subcellular location is the cytoplasm. It catalyses the reaction tRNA(His) + L-histidine + ATP = L-histidyl-tRNA(His) + AMP + diphosphate + H(+). This Protochlamydia amoebophila (strain UWE25) protein is Histidine--tRNA ligase.